Reading from the N-terminus, the 359-residue chain is UDP-N-acetylglucosamine--N-acetylmuramyl-(pentapeptide) pyrophosphoryl-undecaprenol N-acetylglucosamine transferase (359 aa).

Residues threonine 15–glycine 17, asparagine 127, arginine 166, serine 191, isoleucine 245, alanine 264–glutamate 269, and glutamine 290 each bind UDP-N-acetyl-alpha-D-glucosamine.

It belongs to the glycosyltransferase 28 family. MurG subfamily.

Its subcellular location is the cell inner membrane. It catalyses the reaction di-trans,octa-cis-undecaprenyl diphospho-N-acetyl-alpha-D-muramoyl-L-alanyl-D-glutamyl-meso-2,6-diaminopimeloyl-D-alanyl-D-alanine + UDP-N-acetyl-alpha-D-glucosamine = di-trans,octa-cis-undecaprenyl diphospho-[N-acetyl-alpha-D-glucosaminyl-(1-&gt;4)]-N-acetyl-alpha-D-muramoyl-L-alanyl-D-glutamyl-meso-2,6-diaminopimeloyl-D-alanyl-D-alanine + UDP + H(+). Its pathway is cell wall biogenesis; peptidoglycan biosynthesis. Cell wall formation. Catalyzes the transfer of a GlcNAc subunit on undecaprenyl-pyrophosphoryl-MurNAc-pentapeptide (lipid intermediate I) to form undecaprenyl-pyrophosphoryl-MurNAc-(pentapeptide)GlcNAc (lipid intermediate II). The polypeptide is UDP-N-acetylglucosamine--N-acetylmuramyl-(pentapeptide) pyrophosphoryl-undecaprenol N-acetylglucosamine transferase (Pseudomonas putida (strain W619)).